We begin with the raw amino-acid sequence, 491 residues long: MSNLYATEPATNGKVIIDTTAGEIEVELWGKECPKAVRNFLALTMEGYYDGVIFHRVVPGFIIQSGDPTGTGMGGESFYGEPFEDEIHGRLKFNRRGLLGMANNGSRNSNTSQFFITLDAAPELTNKHTMFGKIVGNTIFNVLNIGNLDTDKEERPLIPPKIRRIHIIENPFDDIVPRITAEEKKAQQKAKLEAKKDMEQRERRAKAKKNTGLLSFGDSEEIPEEEVTVKKKSMTRQDLVDPSEAEHTKSKTSKMTETFVNIPPSLKDLGKSRENEASEEKKAVDLKNIRAQHEREKAGGSAARQAEIKRMEEDLRRLKKRSGSVSDSESDSSSRARRKGPSYLEQELAKYASKRGRAAMKAGNKRGRRDEEEDVLTEMRKFSKRVMQAGDEPEEEQAEEIEEGEAKEEGTGIGAAMAEEEGGIEVDDDVGWLTHKLKFQVDDKELTRRAEDEYAVIDPRAKARDLLGKPDKKKLKGNPNRRTVRNSGRNR.

A PPIase cyclophilin-type domain is found at 11 to 167 (TNGKVIIDTT…IPPKIRRIHI (157 aa)). Composition is skewed to basic and acidic residues over residues 186 to 202 (AQQKAKLEAKKDMEQRE), 268 to 298 (DLGKSRENEASEEKKAVDLKNIRAQHEREKA), and 306 to 316 (AEIKRMEEDLR). Disordered regions lie at residues 186–427 (AQQK…IEVD) and 464–491 (RDLLGKPDKKKLKGNPNRRTVRNSGRNR). Residues 277–327 (ASEEKKAVDLKNIRAQHEREKAGGSAARQAEIKRMEEDLRRLKKRSGSVSD) are a coiled coil. A compositionally biased stretch (low complexity) spans 323 to 333 (GSVSDSESDSS). The span at 352 to 367 (ASKRGRAAMKAGNKRG) shows a compositional bias: basic residues. Composition is skewed to acidic residues over residues 391–406 (DEPEEEQAEEIEEGEA) and 418–427 (AEEEGGIEVD). Basic residues predominate over residues 482–491 (RTVRNSGRNR).

It belongs to the cyclophilin-type PPIase family. CWC27 subfamily. Associated with the spliceosome.

The protein resides in the cytoplasm. The protein localises to the nucleus. It carries out the reaction [protein]-peptidylproline (omega=180) = [protein]-peptidylproline (omega=0). Its function is as follows. PPIases accelerate the folding of proteins. It catalyzes the cis-trans isomerization of proline imidic peptide bonds in oligopeptides. Involved in pre-mRNA splicing. This is Peptidyl-prolyl isomerase CWC27 (CWC27) from Cryptococcus neoformans var. neoformans serotype D (strain B-3501A) (Filobasidiella neoformans).